The sequence spans 301 residues: Vomeronasal type-1 receptor 4 (301 aa).

At 1 to 15 (MASRYVAVGMMLSQT) the chain is on the extracellular side. The chain crosses the membrane as a helical span at residues 16-36 (VVGVLGSFSLLLHYLSLHYIG). Residues 37-48 (CRLRSADLIVKH) lie on the Cytoplasmic side of the membrane. Residues 49 to 69 (LIAASFLTLLCKGVPQTMAAF) form a helical membrane-spanning segment. Topologically, residues 70-88 (RVRYFLNAIGCKLVFYLHR) are extracellular. A helical membrane pass occupies residues 89–107 (VGRGVSTGTTCLLSVFQVI). The Cytoplasmic segment spans residues 108 to 126 (TVSSRKSRWAKLKEKAPKH). A helical membrane pass occupies residues 127–147 (VGFSVLLCWILCMLVNIIFPI). Over 148-185 (YVTGKRNHTNITVNKDLGDCCGRGNNKIAQTLRAMLLS) the chain is Extracellular. 2 N-linked (GlcNAc...) asparagine glycosylation sites follow: Asn154 and Asn157. A helical transmembrane segment spans residues 186-206 (FPDVLCLGFMLWASSSMVCIL). Over 207 to 234 (HRHKQRVQHIHRSNLSPRASPENRATQS) the chain is Cytoplasmic. Residues 235 to 255 (ILIPVSTFVSSYTLSCLLQVC) traverse the membrane as a helical segment. Over 256-264 (MALLDNPNS) the chain is Extracellular. The chain crosses the membrane as a helical span at residues 265–285 (LLVNTSALMSACFPTLSPFVL). Over 286 to 301 (MSCDPSVYRLCFAWKR) the chain is Cytoplasmic.

This sequence belongs to the G-protein coupled receptor 1 family.

Its subcellular location is the cell membrane. Its function is as follows. Putative pheromone receptor. The protein is Vomeronasal type-1 receptor 4 (VN1R4) of Pongo pygmaeus (Bornean orangutan).